A 289-amino-acid polypeptide reads, in one-letter code: MGKLIVVGSCGVLVCVLASLYTIGNLLNEIEELQVEFQDGMVEFRAITQDTWARMVSKHINPTGHTNAPPTFETLFGARTARQAGFEQCNCGPKSEGCPAGPPGPPGEGGQKGNPGHDGDDGKPGAPGVIVAITHDIPGGCIKCPPGRPGPKGPSGLPGSAGPAGGNGRRGPPGPVGGPGEQGPQGDAGRPGAAGRPGPAGPRGEPGTEYKPGQPGRPGPQGPRGETGPAGNPGAPGNDGEAGKNGNAGRPGPPGHPGKNGVPGQKGEDAAPGPDAGYCPCPSRAAYKA.

A signal peptide spans 1–18; the sequence is MGKLIVVGSCGVLVCVLA. The interval 95–289 is disordered; the sequence is SEGCPAGPPG…PCPSRAAYKA (195 aa). Triple-helical region stretches follow at residues 101–130 and 147–269; these read GPPG…PGVI and GRPG…KGED. The span at 162–183 shows a compositional bias: gly residues; the sequence is GPAGGNGRRGPPGPVGGPGEQG. Composition is skewed to low complexity over residues 184–207 and 223–239; these read PQGD…GEPG and PRGE…PGND.

Belongs to the cuticular collagen family. In terms of assembly, collagen polypeptide chains are complexed within the cuticle by disulfide bonds and other types of covalent cross-links.

Functionally, nematode cuticles are composed largely of collagen-like proteins. The cuticle functions both as an exoskeleton and as a barrier to protect the worm from its environment. This chain is Cuticle collagen 19 (col-19), found in Caenorhabditis elegans.